Consider the following 80-residue polypeptide: Antitoxin VapB15 (80 aa).

Residues 60-80 (DFSNDEIESFSDTDRKLADES) form a disordered region. Residue glutamate 67 participates in Mg(2+) binding. Position 67 (glutamate 67) interacts with Mn(2+). A compositionally biased stretch (basic and acidic residues) spans 71–80 (DTDRKLADES).

Forms a VapB15-VapC15(2) heterotrimer and a VapB15(2)-VapC15(2) heterotetramer; each toxin pair forms a homodimer which creates a channel in which the antitoxin binds. Requires Mg(2+) as cofactor. Mn(2+) is required as a cofactor.

Its function is as follows. Antitoxin component of a type II toxin-antitoxin (TA) system. Neutralizes the toxic effect of cognate toxin VapC15. The sequence is that of Antitoxin VapB15 (vapB15) from Mycobacterium tuberculosis (strain CDC 1551 / Oshkosh).